We begin with the raw amino-acid sequence, 40 residues long: LTCVKSNSIWFITSENCPAGQNLCFKRWQYISPRMYDFTR.

Cys-3 and Cys-24 are joined by a disulfide.

This sequence belongs to the three-finger toxin family. Short-chain subfamily. Aminergic toxin sub-subfamily. In terms of assembly, monomer. Post-translationally, contains 4 disulfide bonds. In terms of tissue distribution, expressed by the venom gland.

Its subcellular location is the secreted. Functionally, binds irreversibly and specifically to M1 (CHRM1) muscarinic acetylcholine receptors, blocking further binding of antagonists and preventing the action of agonists. This chain is Muscarinic m1-toxin4, found in Dendroaspis angusticeps (Eastern green mamba).